The sequence spans 154 residues: Large ribosomal subunit protein uL13 (154 aa).

This sequence belongs to the universal ribosomal protein uL13 family. As to quaternary structure, part of the 50S ribosomal subunit.

In terms of biological role, this protein is one of the early assembly proteins of the 50S ribosomal subunit, although it is not seen to bind rRNA by itself. It is important during the early stages of 50S assembly. In Cereibacter sphaeroides (strain ATCC 17025 / ATH 2.4.3) (Rhodobacter sphaeroides), this protein is Large ribosomal subunit protein uL13.